We begin with the raw amino-acid sequence, 206 residues long: High frequency lysogenization protein HflD homolog (206 aa).

It belongs to the HflD family.

It localises to the cytoplasm. It is found in the cell inner membrane. This is High frequency lysogenization protein HflD homolog from Ectopseudomonas mendocina (strain ymp) (Pseudomonas mendocina).